Here is a 61-residue protein sequence, read N- to C-terminus: Small ribosomal subunit protein eS30A (61 aa).

Residues 1–36 (MGKVHGSLARAGKVKSQTPKVEKQEKPKQPKGRAYK) form a disordered region.

This sequence belongs to the eukaryotic ribosomal protein eS30 family. As to quaternary structure, component of the small ribosomal subunit (SSU). Mature yeast ribosomes consist of a small (40S) and a large (60S) subunit. The 40S small subunit contains 1 molecule of ribosomal RNA (18S rRNA) and at least 33 different proteins. The large 60S subunit contains 3 rRNA molecules (25S, 5.8S and 5S rRNA) and at least 46 different proteins.

Its subcellular location is the cytoplasm. It is found in the nucleus. Functionally, component of the ribosome, a large ribonucleoprotein complex responsible for the synthesis of proteins in the cell. The small ribosomal subunit (SSU) binds messenger RNAs (mRNAs) and translates the encoded message by selecting cognate aminoacyl-transfer RNA (tRNA) molecules. The large subunit (LSU) contains the ribosomal catalytic site termed the peptidyl transferase center (PTC), which catalyzes the formation of peptide bonds, thereby polymerizing the amino acids delivered by tRNAs into a polypeptide chain. The nascent polypeptides leave the ribosome through a tunnel in the LSU and interact with protein factors that function in enzymatic processing, targeting, and the membrane insertion of nascent chains at the exit of the ribosomal tunnel. This is Small ribosomal subunit protein eS30A (rps3001) from Schizosaccharomyces pombe (strain 972 / ATCC 24843) (Fission yeast).